Consider the following 210-residue polypeptide: MQRPEAWPRPHPGEGAAAAQAGGPAPPARAGEPSGLRLQEPSLYTIKAVFILDNDGRRLLAKYYDDTFPSMKEQMVFEKNVFNKTSRTESEIAFFGGMTIVYKNSIDLFLYVVGSSYENELMLMSVLTCLFESLNHMLRKNVEKRWLLENMDGAFLVLDEIVDGGVILESDPQQVIQKVNFRADDGGLTEQSVAQVLQSAKEQIKWSLLK.

A compositionally biased stretch (basic and acidic residues) spans 1–12 (MQRPEAWPRPHP). The disordered stretch occupies residues 1–34 (MQRPEAWPRPHPGEGAAAAQAGGPAPPARAGEPS). Residues 13-34 (GEGAAAAQAGGPAPPARAGEPS) show a composition bias toward low complexity.

This sequence belongs to the adaptor complexes small subunit family. In terms of assembly, oligomeric complex.

Its subcellular location is the cytoplasm. It localises to the endoplasmic reticulum-Golgi intermediate compartment membrane. It is found in the golgi apparatus membrane. The protein localises to the cytoplasmic vesicle. The protein resides in the COPI-coated vesicle membrane. In terms of biological role, the coatomer is a cytosolic protein complex that binds to dilysine motifs and reversibly associates with Golgi non-clathrin-coated vesicles, which further mediate biosynthetic protein transport from the ER, via the Golgi up to the trans Golgi network. Coatomer complex is required for budding from Golgi membranes, and is essential for the retrograde Golgi-to-ER transport of dilysine-tagged proteins. The zeta subunit may be involved in regulating the coat assembly and, hence, the rate of biosynthetic protein transport due to its association-dissociation properties with the coatomer complex. In Homo sapiens (Human), this protein is Coatomer subunit zeta-2 (COPZ2).